A 368-amino-acid chain; its full sequence is ICEBs1 integrase (368 aa).

In terms of domain architecture, Core-binding (CB) spans 61–143 (VSFPTLISIY…SLSKIFDTAV (83 aa)). A Tyr recombinase domain is found at 164 to 362 (KKMKFWRPEE…YPNKQKEMAD (199 aa)). Residues Arg-201, Lys-239, His-313, Arg-316, and His-339 contribute to the active site. Residue Tyr-349 is the O-(3'-phospho-DNA)-tyrosine intermediate of the active site.

Belongs to the 'phage' integrase family.

Functionally, putative integrase that is involved in the insertion of the integrative and conjugative element ICEBs1. Required for the excision of ICEBs1 from the donor cell genome and subsequent integration in the recipient cell genome. Appears not to be transferred through the mating pore. Integration of ICEBs1 involves an attachment site in the chromosome, attB, and a site in the circular form of ICEBs1, attICEBs1. The sequence is that of ICEBs1 integrase (int) from Bacillus subtilis (strain 168).